The sequence spans 403 residues: Protein IQ-DOMAIN 23 (403 aa).

A disordered region spans residues 1–43 (MGFFGRLFGSKKKSDKAASSRDKRRWSFTTRSSNSSKRAPAVT). The short motif at 10 to 17 (SKKKSDKA) is the Nuclear localization signal element. Residues 27-43 (SFTTRSSNSSKRAPAVT) are compositionally biased toward polar residues. Residues 115–133 (QENIAAMKIQSAFRGYLAR) are calmodulin-binding. 2 consecutive IQ domains span residues 116–144 (ENIA…ALVK) and 145–167 (LQAL…RMQT). Disordered regions lie at residues 176–208 (RARA…RSLH), 242–301 (ILEV…PTSR), and 381–403 (GGDS…SFLV). Over residues 257–267 (LRSERNNESPR) the composition is skewed to basic and acidic residues.

It belongs to the IQD family. Binds to multiple calmodulin (CaM) in the presence of Ca(2+) and CaM-like proteins.

It is found in the nucleus. It localises to the nucleolus. Its subcellular location is the cytoplasm. The protein localises to the cytoskeleton. The protein resides in the cell membrane. Functionally, may be involved in cooperative interactions with calmodulins or calmodulin-like proteins. Recruits calmodulin proteins to microtubules, thus being a potential scaffold in cellular signaling and trafficking. May associate with nucleic acids and regulate gene expression at the transcriptional or post-transcriptional level. The sequence is that of Protein IQ-DOMAIN 23 from Arabidopsis thaliana (Mouse-ear cress).